Reading from the N-terminus, the 375-residue chain is Response regulator aspartate phosphatase E (375 aa).

Residues 24-95 adopt a coiled-coil conformation; that stretch reads NVTDAEMLKA…HKKKLDNMRA (72 aa). TPR repeat units follow at residues 96–129, 177–210, 219–252, 258–291, 297–330, and 333–366; these read YYYN…IPTI, IQCH…AELL, ATAF…YRKI, PQAY…AVDF, MNLF…KGYP, and EELA…QKQI.

It belongs to the Rap family.

It is found in the cytoplasm. Its activity is regulated as follows. Phosphatase activity is inhibited by the phosphatase regulator PhrE. In terms of biological role, involved in the regulation of sporulation. Acts as a phosphatase that specifically dephosphorylates the sporulation initiation phosphotransferase Spo0F and inhibits its activity. Probably plays a dispensable role in the overall context of sporulation initiation. In Bacillus subtilis (strain 168), this protein is Response regulator aspartate phosphatase E (rapE).